A 231-amino-acid chain; its full sequence is Potassium/proton antiporter CemA (231 aa).

Transmembrane regions (helical) follow at residues 7–27 (FISLLYLASIVFLPWWISLSF), 116–136 (IISFVILSVFSILSNEELIFL), 156–176 (ILLLTDLCIGFHSPHGWELMI), and 191–211 (IISGVVSTFPVILDTIFKYWI).

It belongs to the CemA family.

It localises to the plastid. The protein localises to the chloroplast inner membrane. The catalysed reaction is K(+)(in) + H(+)(out) = K(+)(out) + H(+)(in). Contributes to K(+)/H(+) antiport activity by supporting proton efflux to control proton extrusion and homeostasis in chloroplasts in a light-dependent manner to modulate photosynthesis. Prevents excessive induction of non-photochemical quenching (NPQ) under continuous-light conditions. Indirectly promotes efficient inorganic carbon uptake into chloroplasts. The protein is Potassium/proton antiporter CemA of Morus indica (Mulberry).